A 104-amino-acid chain; its full sequence is Large ribosomal subunit protein bL21 (104 aa).

This sequence belongs to the bacterial ribosomal protein bL21 family. In terms of assembly, part of the 50S ribosomal subunit. Contacts protein L20.

In terms of biological role, this protein binds to 23S rRNA in the presence of protein L20. The chain is Large ribosomal subunit protein bL21 from Azobacteroides pseudotrichonymphae genomovar. CFP2.